Here is a 377-residue protein sequence, read N- to C-terminus: Succinyl-diaminopimelate desuccinylase (377 aa).

Residue histidine 66 coordinates Zn(2+). The active site involves aspartate 68. Aspartate 99 provides a ligand contact to Zn(2+). Glutamate 133 serves as the catalytic Proton acceptor. Positions 134, 162, and 348 each coordinate Zn(2+).

It belongs to the peptidase M20A family. DapE subfamily. In terms of assembly, homodimer. It depends on Zn(2+) as a cofactor. Co(2+) is required as a cofactor.

The enzyme catalyses N-succinyl-(2S,6S)-2,6-diaminopimelate + H2O = (2S,6S)-2,6-diaminopimelate + succinate. It participates in amino-acid biosynthesis; L-lysine biosynthesis via DAP pathway; LL-2,6-diaminopimelate from (S)-tetrahydrodipicolinate (succinylase route): step 3/3. In terms of biological role, catalyzes the hydrolysis of N-succinyl-L,L-diaminopimelic acid (SDAP), forming succinate and LL-2,6-diaminopimelate (DAP), an intermediate involved in the bacterial biosynthesis of lysine and meso-diaminopimelic acid, an essential component of bacterial cell walls. This chain is Succinyl-diaminopimelate desuccinylase, found in Marinomonas sp. (strain MWYL1).